The following is a 190-amino-acid chain: Mitochondrial inner membrane protease subunit 1 (190 aa).

Catalysis depends on residues Ser40 and Lys84.

It belongs to the peptidase S26 family. IMP1 subfamily. As to quaternary structure, component of the mitochondrial inner membrane peptidase (IMP) complex which at least consists of IMP1, IMP2 and SOM1.

Its subcellular location is the mitochondrion inner membrane. Catalytic component of the mitochondrial inner membrane peptidase (IMP) complex. IMP catalyzes the removal of signal peptides required for the targeting of proteins from the mitochondrial matrix, across the inner membrane, into the inter-membrane space. The two catalytic IMP subunits seem to have non-overlapping substrate specificities. IMP1 substrates include nuclear encoded CYB2, mitochondrially encoded COX2, NADH-cytochrome b5 reductase and GUT2. This chain is Mitochondrial inner membrane protease subunit 1 (IMP1), found in Saccharomyces cerevisiae (strain ATCC 204508 / S288c) (Baker's yeast).